A 313-amino-acid polypeptide reads, in one-letter code: Protein FixB (313 aa).

255 to 283 (LYLAVGISGQIQHMVGANASQTIFAINKD) provides a ligand contact to FAD.

It belongs to the ETF alpha-subunit/FixB family. Heterodimer of FixA and FixB.

The protein operates within amine and polyamine metabolism; carnitine metabolism. Its function is as follows. Required for anaerobic carnitine reduction. May bring reductant to CaiA. This is Protein FixB from Escherichia coli (strain SMS-3-5 / SECEC).